The primary structure comprises 196 residues: MPVGVPKVFYALPDEEEADWIDLYHCLYQERLIVICGDLNDEAVNQIVSVLIYLSTRDDSKEFFIYINSPGGSVTSGIAIYDAMRFNNTPVNTIAVGISASMASFILAGGDIGKRLAFPHSRIMIHQPEGGSEGQSSEIVHEAQEVVRIRRQVARIYAQRTGQPLDTIARDMDRDQFMSAREAKTYGIVDLVAAEK.

Ser101 (nucleophile) is an active-site residue. His126 is an active-site residue.

The protein belongs to the peptidase S14 family. In terms of assembly, component of the chloroplastic Clp protease core complex.

The protein localises to the plastid. Its subcellular location is the chloroplast stroma. The catalysed reaction is Hydrolysis of proteins to small peptides in the presence of ATP and magnesium. alpha-casein is the usual test substrate. In the absence of ATP, only oligopeptides shorter than five residues are hydrolyzed (such as succinyl-Leu-Tyr-|-NHMec, and Leu-Tyr-Leu-|-Tyr-Trp, in which cleavage of the -Tyr-|-Leu- and -Tyr-|-Trp bonds also occurs).. Cleaves peptides in various proteins in a process that requires ATP hydrolysis. Has a chymotrypsin-like activity. Plays a major role in the degradation of misfolded proteins. This chain is ATP-dependent Clp protease proteolytic subunit, found in Pleurastrum terricola (Filamentous green alga).